Reading from the N-terminus, the 196-residue chain is Holliday junction branch migration complex subunit RuvA (196 aa).

Positions 1-63 (MYDYIKGILT…EDAHLLYGFA (63 aa)) are domain I. Residues 64–142 (TENEKSVFLS…MSEEAGPVQQ (79 aa)) form a domain II region. The tract at residues 142–146 (QVAPS) is flexible linker. Positions 147-196 (SENIALEEAMEAMEALGYRPAELKKIKKFFEGTNDTAENYIKSALKMLMK) are domain III.

Belongs to the RuvA family. In terms of assembly, homotetramer. Forms an RuvA(8)-RuvB(12)-Holliday junction (HJ) complex. HJ DNA is sandwiched between 2 RuvA tetramers; dsDNA enters through RuvA and exits via RuvB. An RuvB hexamer assembles on each DNA strand where it exits the tetramer. Each RuvB hexamer is contacted by two RuvA subunits (via domain III) on 2 adjacent RuvB subunits; this complex drives branch migration. In the full resolvosome a probable DNA-RuvA(4)-RuvB(12)-RuvC(2) complex forms which resolves the HJ.

It localises to the cytoplasm. Functionally, the RuvA-RuvB-RuvC complex processes Holliday junction (HJ) DNA during genetic recombination and DNA repair, while the RuvA-RuvB complex plays an important role in the rescue of blocked DNA replication forks via replication fork reversal (RFR). RuvA specifically binds to HJ cruciform DNA, conferring on it an open structure. The RuvB hexamer acts as an ATP-dependent pump, pulling dsDNA into and through the RuvAB complex. HJ branch migration allows RuvC to scan DNA until it finds its consensus sequence, where it cleaves and resolves the cruciform DNA. The polypeptide is Holliday junction branch migration complex subunit RuvA (Streptococcus suis (strain 98HAH33)).